A 612-amino-acid chain; its full sequence is Peroxisomal targeting signal receptor (612 aa).

Position 1 is an N-acetylmethionine (methionine 1). The segment at methionine 1–lysine 24 is disordered. A Glycyl cysteine thioester (Cys-Gly) (interchain with G-Cter in ubiquitin) cross-link involves residue cysteine 6. The segment at serine 7–asparagine 29 is amphipathic helix 1 (AH1). Residues lysine 18 and lysine 24 each participate in a glycyl lysine isopeptide (Lys-Gly) (interchain with G-Cter in ubiquitin) cross-link. A Phosphoserine modification is found at serine 61. Residues asparagine 64–serine 97 form a TPR 1 repeat. Residues arginine 70–threonine 104 form an amphipathic helix 2 (AH2) region. The short motif at tryptophan 120–phenylalanine 124 is the WxxxF/Y motif 1 element. The interval serine 129–alanine 151 is disordered. An amphipathic helix 3 (AH3) region spans residues proline 158–serine 174. The tract at residues alanine 182–glutamine 202 is disordered. A WxxxF/Y motif 2 motif is present at residues tryptophan 204–phenylalanine 208. Positions phenylalanine 257–proline 273 are amphipathic helix 4 (AH4). TPR repeat units lie at residues proline 313–histidine 346, valine 347–asparagine 380, leucine 381–arginine 418, isoleucine 419–aspartate 456, proline 457–aspartate 490, glutamate 491–phenylalanine 524, and valine 525–asparagine 558.

It belongs to the peroxisomal targeting signal receptor family. In terms of assembly, interacts (via WxxxF/Y and LVxEF motifs) with PEX14; promoting translocation through the PEX13-PEX14 docking complex. Post-translationally, monoubiquitinated at Cys-6 by PEX2 during PEX5 passage through the retrotranslocation channel: monoubiquitination acts as a signal for PEX5 extraction and is required for proper export from peroxisomes and recycling. Ubiquitination at Cys-6 is UBC4-independent but requires the presence of PEX4. When PEX5 recycling is compromised, polyubiquitinated at Lys-18 and Lys-24 by PEX10 during its passage through the retrotranslocation channel, leading to its degradation. Ubiquitination at Lys-18 and Lys-24 are UBC4-dependent. Monoubiquitination at Cys-6 and polyubiquitination at Lys-18 and Lys-24 are removed by UBP15 in the cytosol, resetting PEX5 for a subsequent import cycle.

It is found in the cytoplasm. The protein resides in the cytosol. Its subcellular location is the peroxisome matrix. Receptor that mediates peroxisomal import of proteins containing a C-terminal PTS1-type tripeptide peroxisomal targeting signal (SKL-type). Binds to cargo proteins containing a PTS1 peroxisomal targeting signal in the cytosol, and translocates them into the peroxisome matrix by passing through the PEX13-PEX14 docking complex along with cargo proteins. PEX5 receptor is then retrotranslocated into the cytosol, leading to release of bound cargo in the peroxisome matrix, and reset for a subsequent peroxisome import cycle. In Saccharomyces cerevisiae (strain ATCC 204508 / S288c) (Baker's yeast), this protein is Peroxisomal targeting signal receptor.